A 316-amino-acid polypeptide reads, in one-letter code: tRNA dimethylallyltransferase (316 aa).

13 to 20 (GPTAVGKT) serves as a coordination point for ATP. 15–20 (TAVGKT) serves as a coordination point for substrate. Positions 38–41 (DSIQ) are interaction with substrate tRNA.

The protein belongs to the IPP transferase family. In terms of assembly, monomer. The cofactor is Mg(2+).

The catalysed reaction is adenosine(37) in tRNA + dimethylallyl diphosphate = N(6)-dimethylallyladenosine(37) in tRNA + diphosphate. Functionally, catalyzes the transfer of a dimethylallyl group onto the adenine at position 37 in tRNAs that read codons beginning with uridine, leading to the formation of N6-(dimethylallyl)adenosine (i(6)A). The sequence is that of tRNA dimethylallyltransferase from Staphylococcus carnosus (strain TM300).